A 102-amino-acid polypeptide reads, in one-letter code: Small ribosomal subunit protein uS10 (102 aa).

This sequence belongs to the universal ribosomal protein uS10 family. As to quaternary structure, part of the 30S ribosomal subunit.

Its function is as follows. Involved in the binding of tRNA to the ribosomes. The chain is Small ribosomal subunit protein uS10 from Clostridium kluyveri (strain NBRC 12016).